The sequence spans 355 residues: Protein RecA (355 aa).

Position 74 to 81 (74 to 81) interacts with ATP; that stretch reads GPESSGKT.

Belongs to the RecA family.

It is found in the cytoplasm. Its function is as follows. Can catalyze the hydrolysis of ATP in the presence of single-stranded DNA, the ATP-dependent uptake of single-stranded DNA by duplex DNA, and the ATP-dependent hybridization of homologous single-stranded DNAs. It interacts with LexA causing its activation and leading to its autocatalytic cleavage. This chain is Protein RecA, found in Cytophaga hutchinsonii (strain ATCC 33406 / DSM 1761 / CIP 103989 / NBRC 15051 / NCIMB 9469 / D465).